A 432-amino-acid polypeptide reads, in one-letter code: Adenosylhomocysteinase (432 aa).

Residues 1–24 are disordered; that stretch reads MSAYSPLSAQLDADTDVDVESTRT. The substrate site is built by aspartate 137 and glutamate 162. 163 to 165 is an NAD(+) binding site; it reads TTT. 2 residues coordinate substrate: lysine 192 and aspartate 196. Residues asparagine 197, 226–231, glutamate 249, asparagine 284, 305–307, and asparagine 352 contribute to the NAD(+) site; these read GYGYCG and AGH.

The protein belongs to the adenosylhomocysteinase family. Requires NAD(+) as cofactor.

It localises to the cytoplasm. The catalysed reaction is S-adenosyl-L-homocysteine + H2O = L-homocysteine + adenosine. Its pathway is amino-acid biosynthesis; L-homocysteine biosynthesis; L-homocysteine from S-adenosyl-L-homocysteine: step 1/1. May play a key role in the regulation of the intracellular concentration of adenosylhomocysteine. This Haloquadratum walsbyi (strain DSM 16854 / JCM 12705 / C23) protein is Adenosylhomocysteinase.